Consider the following 508-residue polypeptide: N-acetyl-D-hexosamine oxidase (508 aa).

Residues 26 to 203 (TDAQAAGRIA…TAYTFARLPE (178 aa)) enclose the FAD-binding PCMH-type domain. Positions 64–123 (HCYEDFVSNNPDGAIVDLSLLNAPEVRADGTVRIPAGTQNWNGYLELYKRHNLTLPGGSC) form a cross-link, 6-(S-cysteinyl)-8alpha-(pros-histidyl)-FAD (His-Cys).

Belongs to the oxygen-dependent FAD-linked oxidoreductase family. Requires FAD as cofactor.

It carries out the reaction N-acetyl-D-glucosamine + O2 + H2O = N-acetyl-D-glucosaminate + H2O2 + H(+). The catalysed reaction is N-acetyl-D-galactosamine + O2 + H2O = N-acetyl-D-galactosaminate + H2O2 + H(+). It catalyses the reaction N-acetyl-D-glucosamine + O2 = N-acetyl-D-glucosamino-1,5-lactone + H2O2. The enzyme catalyses N-acetyl-D-galactosamine + O2 = N-acetyl-D-galactosamino-1,5-lactone + H2O2. Catalyzes the oxidation of a range of monosaccharides in vitro, displaying the highest activity with N-acetylglucosamine (GlcNAc) and N-acetylgalactosamine (GalNAc), with a reduction of O2 to H2O2. Acts upon the C1 carbon of the GlcNAc or GalNAc molecule, producing the corresponding lactone, which can spontaneously hydrolyze. Its biological function is unclear, but its main function might be connected to extracellular production of hydrogen peroxide to compete with other organisms through oxidative stress, or support the action of peroxidases and peroxygenases. The chain is N-acetyl-D-hexosamine oxidase from Ralstonia solanacearum (strain UW551).